Here is a 427-residue protein sequence, read N- to C-terminus: Glutamate-1-semialdehyde 2,1-aminomutase (427 aa).

N6-(pyridoxal phosphate)lysine is present on Lys-268.

The protein belongs to the class-III pyridoxal-phosphate-dependent aminotransferase family. HemL subfamily. Pyridoxal 5'-phosphate is required as a cofactor.

The protein localises to the cytoplasm. It catalyses the reaction (S)-4-amino-5-oxopentanoate = 5-aminolevulinate. It participates in porphyrin-containing compound metabolism; protoporphyrin-IX biosynthesis; 5-aminolevulinate from L-glutamyl-tRNA(Glu): step 2/2. This chain is Glutamate-1-semialdehyde 2,1-aminomutase, found in Methanococcus maripaludis (strain C6 / ATCC BAA-1332).